Reading from the N-terminus, the 512-residue chain is MSDKLIIFDTTLRDGEQSPGASMTRDEKLRIARQLERLRVDVIEAGFAASSNGDFEAVQAIAQAIKDSTVCSLSRANDRDIARAAEALKDAQRARIHTFIATSPLHMEKKLRMTPEQVLEQAKQSVRFARNLVADIEFSPEDGYRSEPDFLCRVLEAVIAEGATTINVPDTVGYAIPELYGNFIRNLRERIPNSDKAVWSVHCHNDLGMAVANSLAGVKIGGARQVECTINGLGERAGNCSLEEIVMAVKTRRDYFGLELGIDTQHIVAASRMVSQTTGFVVQPNKAVVGANAFAHASGIHQDGVLKARDTYEIMRAEDVGWTANKIVLGKLSGRNAFKQRLQDLGVQLESEADVNAAFLRFKELADRKSEIFDEDILALVSGDATAGAGERYGFVSLSQRSETGERPHAAVVFTVDGKEVHGASEGNGPVDASLKAIESHVHSGAEMVLYSVNAISGSTESQGEVTVRLQDSGRVVNGVGADPDIVVASAKAYLSALNKLQSKAERVAAQG.

A Pyruvate carboxyltransferase domain is found at 5 to 268; the sequence is LIIFDTTLRD…ELGIDTQHIV (264 aa). The Mn(2+) site is built by Asp14, His202, His204, and Asn239. The tract at residues 394–512 is regulatory domain; sequence GFVSLSQRSE…SKAERVAAQG (119 aa).

This sequence belongs to the alpha-IPM synthase/homocitrate synthase family. LeuA type 1 subfamily. As to quaternary structure, homodimer. It depends on Mn(2+) as a cofactor.

It localises to the cytoplasm. The enzyme catalyses 3-methyl-2-oxobutanoate + acetyl-CoA + H2O = (2S)-2-isopropylmalate + CoA + H(+). The protein operates within amino-acid biosynthesis; L-leucine biosynthesis; L-leucine from 3-methyl-2-oxobutanoate: step 1/4. In terms of biological role, catalyzes the condensation of the acetyl group of acetyl-CoA with 3-methyl-2-oxobutanoate (2-ketoisovalerate) to form 3-carboxy-3-hydroxy-4-methylpentanoate (2-isopropylmalate). The sequence is that of 2-isopropylmalate synthase from Paracidovorax citrulli (strain AAC00-1) (Acidovorax citrulli).